The chain runs to 331 residues: Aspartate carbamoyltransferase catalytic subunit (331 aa).

Arginine 76 and threonine 77 together coordinate carbamoyl phosphate. Residue lysine 104 coordinates L-aspartate. Carbamoyl phosphate contacts are provided by arginine 126, histidine 154, and glutamine 157. 2 residues coordinate L-aspartate: arginine 187 and arginine 246. 2 residues coordinate carbamoyl phosphate: glycine 287 and proline 288.

This sequence belongs to the aspartate/ornithine carbamoyltransferase superfamily. ATCase family. In terms of assembly, heterododecamer (2C3:3R2) of six catalytic PyrB chains organized as two trimers (C3), and six regulatory PyrI chains organized as three dimers (R2).

The enzyme catalyses carbamoyl phosphate + L-aspartate = N-carbamoyl-L-aspartate + phosphate + H(+). Its pathway is pyrimidine metabolism; UMP biosynthesis via de novo pathway; (S)-dihydroorotate from bicarbonate: step 2/3. Catalyzes the condensation of carbamoyl phosphate and aspartate to form carbamoyl aspartate and inorganic phosphate, the committed step in the de novo pyrimidine nucleotide biosynthesis pathway. The chain is Aspartate carbamoyltransferase catalytic subunit from Dehalococcoides mccartyi (strain CBDB1).